The primary structure comprises 141 residues: Large ribosomal subunit protein uL11 (141 aa).

The protein belongs to the universal ribosomal protein uL11 family. In terms of assembly, part of the ribosomal stalk of the 50S ribosomal subunit. Interacts with L10 and the large rRNA to form the base of the stalk. L10 forms an elongated spine to which L12 dimers bind in a sequential fashion forming a multimeric L10(L12)X complex. One or more lysine residues are methylated.

Functionally, forms part of the ribosomal stalk which helps the ribosome interact with GTP-bound translation factors. This chain is Large ribosomal subunit protein uL11, found in Lactobacillus delbrueckii subsp. bulgaricus (strain ATCC 11842 / DSM 20081 / BCRC 10696 / JCM 1002 / NBRC 13953 / NCIMB 11778 / NCTC 12712 / WDCM 00102 / Lb 14).